The following is a 134-amino-acid chain: ATP synthase epsilon chain (134 aa).

The protein belongs to the ATPase epsilon chain family. In terms of assembly, F-type ATPases have 2 components, CF(1) - the catalytic core - and CF(0) - the membrane proton channel. CF(1) has five subunits: alpha(3), beta(3), gamma(1), delta(1), epsilon(1). CF(0) has three main subunits: a, b and c.

The protein resides in the cell membrane. Functionally, produces ATP from ADP in the presence of a proton gradient across the membrane. This chain is ATP synthase epsilon chain, found in Listeria innocua serovar 6a (strain ATCC BAA-680 / CLIP 11262).